The sequence spans 555 residues: B3 domain-containing protein REM10 (555 aa).

DNA-binding regions (TF-B3) lie at residues 11–103, 150–247, 276–372, and 460–554; these read NPQF…LGPS, CFVA…FPMT, SFVA…LPLN, and SQNR…FCSK.

The protein resides in the nucleus. The polypeptide is B3 domain-containing protein REM10 (REM10) (Arabidopsis thaliana (Mouse-ear cress)).